A 330-amino-acid chain; its full sequence is DNA-directed RNA polymerase subunit alpha (330 aa).

An alpha N-terminal domain (alpha-NTD) region spans residues methionine 1–lysine 237. Positions phenylalanine 251–glutamate 330 are alpha C-terminal domain (alpha-CTD).

This sequence belongs to the RNA polymerase alpha chain family. In terms of assembly, homodimer. The RNAP catalytic core consists of 2 alpha, 1 beta, 1 beta' and 1 omega subunit. When a sigma factor is associated with the core the holoenzyme is formed, which can initiate transcription.

The catalysed reaction is RNA(n) + a ribonucleoside 5'-triphosphate = RNA(n+1) + diphosphate. Functionally, DNA-dependent RNA polymerase catalyzes the transcription of DNA into RNA using the four ribonucleoside triphosphates as substrates. This is DNA-directed RNA polymerase subunit alpha from Legionella pneumophila (strain Paris).